Reading from the N-terminus, the 180-residue chain is ATP synthase subunit delta (180 aa).

Belongs to the ATPase delta chain family. F-type ATPases have 2 components, F(1) - the catalytic core - and F(0) - the membrane proton channel. F(1) has five subunits: alpha(3), beta(3), gamma(1), delta(1), epsilon(1). F(0) has three main subunits: a(1), b(2) and c(10-14). The alpha and beta chains form an alternating ring which encloses part of the gamma chain. F(1) is attached to F(0) by a central stalk formed by the gamma and epsilon chains, while a peripheral stalk is formed by the delta and b chains.

Its subcellular location is the cell inner membrane. Its function is as follows. F(1)F(0) ATP synthase produces ATP from ADP in the presence of a proton or sodium gradient. F-type ATPases consist of two structural domains, F(1) containing the extramembraneous catalytic core and F(0) containing the membrane proton channel, linked together by a central stalk and a peripheral stalk. During catalysis, ATP synthesis in the catalytic domain of F(1) is coupled via a rotary mechanism of the central stalk subunits to proton translocation. In terms of biological role, this protein is part of the stalk that links CF(0) to CF(1). It either transmits conformational changes from CF(0) to CF(1) or is implicated in proton conduction. The protein is ATP synthase subunit delta of Parabacteroides distasonis (strain ATCC 8503 / DSM 20701 / CIP 104284 / JCM 5825 / NCTC 11152).